A 367-amino-acid polypeptide reads, in one-letter code: Apolipoprotein A-V (367 aa).

Positions M1–T20 are cleaved as a signal peptide. S56 carries the post-translational modification Phosphoserine.

This sequence belongs to the apolipoprotein A1/A4/E family. In terms of assembly, interacts with GPIHBP1. Interacts with SORL1; this interaction leads to APOA5 internalization and sorting either to lysosomes and degradation, or to the trans-Golgi network. In terms of processing, phosphorylated by FAM20C in the extracellular medium.

Its subcellular location is the secreted. The protein resides in the early endosome. It localises to the late endosome. The protein localises to the golgi apparatus. It is found in the trans-Golgi network. Functionally, minor apolipoprotein mainly associated with HDL and to a lesser extent with VLDL. May also be associated with chylomicrons. Important determinant of plasma triglyceride (TG) levels by both being a potent stimulator of apo-CII lipoprotein lipase (LPL) TG hydrolysis and an inhibitor of the hepatic VLDL-TG production rate (without affecting the VLDL-apoB production rate). Activates poorly lecithin:cholesterol acyltransferase (LCAT) and does not enhance efflux of cholesterol from macrophages. Binds heparin. In Phoca vitulina (Harbor seal), this protein is Apolipoprotein A-V (APOA5).